We begin with the raw amino-acid sequence, 449 residues long: Probable glycine dehydrogenase (decarboxylating) subunit 1 (449 aa).

The protein belongs to the GcvP family. N-terminal subunit subfamily. As to quaternary structure, the glycine cleavage system is composed of four proteins: P, T, L and H. In this organism, the P 'protein' is a heterodimer of two subunits.

The enzyme catalyses N(6)-[(R)-lipoyl]-L-lysyl-[glycine-cleavage complex H protein] + glycine + H(+) = N(6)-[(R)-S(8)-aminomethyldihydrolipoyl]-L-lysyl-[glycine-cleavage complex H protein] + CO2. The glycine cleavage system catalyzes the degradation of glycine. The P protein binds the alpha-amino group of glycine through its pyridoxal phosphate cofactor; CO(2) is released and the remaining methylamine moiety is then transferred to the lipoamide cofactor of the H protein. The protein is Probable glycine dehydrogenase (decarboxylating) subunit 1 of Rhodospirillum centenum (strain ATCC 51521 / SW).